A 226-amino-acid polypeptide reads, in one-letter code: Protein TRI1 (226 aa).

The DEK-C domain occupies 1-56 (MADINKYIPMVDAILSVSNPDEISPKRVRKALQILYSVNLDSQRKLINELILERFG). The tract at residues 83 to 118 (QKEEERPLRSTRKRKGKSESKSKRKKKKNDSPDSNS) is disordered. The segment covering 91-110 (RSTRKRKGKSESKSKRKKKK) has biased composition (basic residues). Ser-113 carries the phosphoserine modification. An SWIB/MDM2 domain is found at 119-195 (ISVRKVLLSA…NKLLTKHLFN (77 aa)). The segment covering 200 to 218 (VKHEEEQKQTPEKEIKLEN) has biased composition (basic and acidic residues). Residues 200–226 (VKHEEEQKQTPEKEIKLENESLPNLSG) form a disordered region. Residues Lys-201 and Lys-215 each participate in a glycyl lysine isopeptide (Lys-Gly) (interchain with G-Cter in SUMO) cross-link. Ser-225 is subject to Phosphoserine.

The protein resides in the cytoplasm. It is found in the nucleus. It localises to the nucleolus. May be involved in transcription regulation. This is Protein TRI1 (TRI1) from Saccharomyces cerevisiae (strain ATCC 204508 / S288c) (Baker's yeast).